The chain runs to 998 residues: Methyl sulfide methyltransferase-associated sensor (998 aa).

The PAS 1 domain occupies 40 to 77 (FGYSPKDFISGGLGYADIIYPADLEIAVSQFFSYVEKD). In terms of domain architecture, PAC 1 spans 117–169 (FTQQYRLLNKSGDVLWVEAEIKVLEEEEGKAGLFQVTVFDISRWKHTEKAMPA). In terms of domain architecture, PAS 2 spans 209 to 246 (LGYTPEDFTSGRIVYTDIIHPDDLDNVRAEVSKNTEEG). The PAC 2 domain occupies 250–302 (FSKEYRVLAKSGEVRYVDERTLIRRNEKGEITCYQGILLDITQRKEAEELILS). A GAF 1 domain is found at 314–458 (ASLDEVLLLL…NAYLAGIAIE (145 aa)). In terms of domain architecture, PAS 3 spans 469–540 (SENRFRTIFD…ENMQKIKAEG (72 aa)). The 144-residue stretch at 609-752 (ASLKEITDFA…LMQGMWQLIQ (144 aa)) folds into the GAF 2 domain. C656 provides a ligand contact to heme. Residues 783 to 998 (EFVEEMMFPE…GNLMHVKLPK (216 aa)) enclose the Histidine kinase domain.

The cofactor is heme. In terms of processing, autophosphorylates: autophosphorylation is dependent on the redox state of heme cofactor and is promoted upon reduction.

The protein localises to the cytoplasm. The enzyme catalyses ATP + protein L-histidine = ADP + protein N-phospho-L-histidine.. In terms of biological role, heme-binding sensor kinase component part of a two-component regulatory system involved in methyl sulfide metabolism. Does not act as a phytochrome-like photoreceptor. The polypeptide is Methyl sulfide methyltransferase-associated sensor (msmS) (Methanosarcina acetivorans (strain ATCC 35395 / DSM 2834 / JCM 12185 / C2A)).